The chain runs to 558 residues: Dihydroxy-acid dehydratase (558 aa).

Mg(2+) is bound at residue Asp-81. A [2Fe-2S] cluster-binding site is contributed by Cys-122. 2 residues coordinate Mg(2+): Asp-123 and Lys-124. An N6-carboxylysine modification is found at Lys-124. Cys-195 lines the [2Fe-2S] cluster pocket. Glu-447 contributes to the Mg(2+) binding site. Ser-473 acts as the Proton acceptor in catalysis.

It belongs to the IlvD/Edd family. Homodimer. The cofactor is [2Fe-2S] cluster. Requires Mg(2+) as cofactor.

The enzyme catalyses (2R)-2,3-dihydroxy-3-methylbutanoate = 3-methyl-2-oxobutanoate + H2O. It catalyses the reaction (2R,3R)-2,3-dihydroxy-3-methylpentanoate = (S)-3-methyl-2-oxopentanoate + H2O. It functions in the pathway amino-acid biosynthesis; L-isoleucine biosynthesis; L-isoleucine from 2-oxobutanoate: step 3/4. It participates in amino-acid biosynthesis; L-valine biosynthesis; L-valine from pyruvate: step 3/4. Functions in the biosynthesis of branched-chain amino acids. Catalyzes the dehydration of (2R,3R)-2,3-dihydroxy-3-methylpentanoate (2,3-dihydroxy-3-methylvalerate) into 2-oxo-3-methylpentanoate (2-oxo-3-methylvalerate) and of (2R)-2,3-dihydroxy-3-methylbutanoate (2,3-dihydroxyisovalerate) into 2-oxo-3-methylbutanoate (2-oxoisovalerate), the penultimate precursor to L-isoleucine and L-valine, respectively. The sequence is that of Dihydroxy-acid dehydratase from Bacillus velezensis (strain DSM 23117 / BGSC 10A6 / LMG 26770 / FZB42) (Bacillus amyloliquefaciens subsp. plantarum).